We begin with the raw amino-acid sequence, 216 residues long: Octanoyltransferase (216 aa).

The BPL/LPL catalytic domain occupies 30 to 216; the sequence is GEAGEAVWLL…KRQFFEVFGA (187 aa). Substrate is bound by residues 69–76, 149–151, and 162–164; these read RGGQYTYH, AIG, and GLS. Cys-180 serves as the catalytic Acyl-thioester intermediate.

It belongs to the LipB family.

It is found in the cytoplasm. The enzyme catalyses octanoyl-[ACP] + L-lysyl-[protein] = N(6)-octanoyl-L-lysyl-[protein] + holo-[ACP] + H(+). The protein operates within protein modification; protein lipoylation via endogenous pathway; protein N(6)-(lipoyl)lysine from octanoyl-[acyl-carrier-protein]: step 1/2. Functionally, catalyzes the transfer of endogenously produced octanoic acid from octanoyl-acyl-carrier-protein onto the lipoyl domains of lipoate-dependent enzymes. Lipoyl-ACP can also act as a substrate although octanoyl-ACP is likely to be the physiological substrate. The sequence is that of Octanoyltransferase from Jannaschia sp. (strain CCS1).